The sequence spans 530 residues: Hyccin 2 (530 aa).

Residues Thr-30 and Thr-306 each carry the phosphothreonine modification. 2 positions are modified to phosphoserine: Ser-321 and Ser-341. Residues 328–410 (RREGAEGVNG…DSVVRKQYVQ (83 aa)) are disordered. The span at 353–373 (SGASLSSQPIGTKPSSSSQRG) shows a compositional bias: polar residues. A phosphoserine mark is found at Ser-430, Ser-442, Ser-444, and Ser-491. The segment at 498–530 (GQAGEGKELLSPGAPLTKQSRSPSFNMQLISQV) is disordered. A compositionally biased stretch (polar residues) spans 514 to 530 (TKQSRSPSFNMQLISQV).

It belongs to the Hyccin family. Component of a phosphatidylinositol 4-kinase (PI4K) complex, composed of PI4KA, EFR3 (EFR3A or EFR3B), TTC7 (TTC7A or TTC7B) and HYCC (HYCC1 or HYCC2).

Its subcellular location is the cytoplasm. It is found in the cytosol. It localises to the cell membrane. Its function is as follows. Component of a complex required to localize phosphatidylinositol 4-kinase (PI4K) to the plasma membrane. The chain is Hyccin 2 (HYCC2) from Pongo abelii (Sumatran orangutan).